A 361-amino-acid chain; its full sequence is tRNA-specific 2-thiouridylase MnmA (361 aa).

Residues 8-15 (GMSGGVDS) and methionine 34 each bind ATP. An interaction with target base in tRNA region spans residues 94–96 (NPD). Catalysis depends on cysteine 99, which acts as the Nucleophile. Residues cysteine 99 and cysteine 195 are joined by a disulfide bond. Position 123 (glycine 123) interacts with ATP. The interval 145 to 147 (KDQ) is interaction with tRNA. Cysteine 195 serves as the catalytic Cysteine persulfide intermediate. The interval 307–308 (RY) is interaction with tRNA.

It belongs to the MnmA/TRMU family.

Its subcellular location is the cytoplasm. It catalyses the reaction S-sulfanyl-L-cysteinyl-[protein] + uridine(34) in tRNA + AH2 + ATP = 2-thiouridine(34) in tRNA + L-cysteinyl-[protein] + A + AMP + diphosphate + H(+). In terms of biological role, catalyzes the 2-thiolation of uridine at the wobble position (U34) of tRNA, leading to the formation of s(2)U34. In Legionella pneumophila (strain Lens), this protein is tRNA-specific 2-thiouridylase MnmA.